We begin with the raw amino-acid sequence, 144 residues long: Large ribosomal subunit protein uL15 (144 aa).

Residues methionine 1–phenylalanine 50 are disordered. Over residues arginine 21–phenylalanine 50 the composition is skewed to gly residues.

Belongs to the universal ribosomal protein uL15 family. As to quaternary structure, part of the 50S ribosomal subunit.

Its function is as follows. Binds to the 23S rRNA. The chain is Large ribosomal subunit protein uL15 from Tolumonas auensis (strain DSM 9187 / NBRC 110442 / TA 4).